The sequence spans 1101 residues: Type II inositol polyphosphate 5-phosphatase 15 (1101 aa).

Positions 31–40 (RSAYSSSSSS) are enriched in low complexity. Residues 31–54 (RSAYSSSSSSGDDESQPSVDDSNK) are disordered. WD repeat units follow at residues 121–162 (LRET…GSGR), 180–219 (FGSA…GIEE), 225–263 (AHRG…GKSL), 403–432 (DDSR…MRWD), 433–481 (GNGN…GGWV), and 483–519 (HSGP…PLDN). 2 catalytic regions span residues 749–765 (DMVI…DDIT) and 828–843 (KKRI…YRDN). Residue lysine 907 forms a Glycyl lysine isopeptide (Lys-Gly) (interchain with G-Cter in ubiquitin) linkage.

This sequence belongs to the inositol polyphosphate 5-phosphatase family. Mg(2+) is required as a cofactor. In terms of tissue distribution, predominantly expressed in interfascicular fibers and vascular bundles. Expressed in seedlings, stems, roots and flowers. Expressed at lower level in mature leaves.

It carries out the reaction a 1,2-diacyl-sn-glycero-3-phospho-(1D-myo-inositol-4,5-bisphosphate) + H2O = a 1,2-diacyl-sn-glycero-3-phospho-(1D-myo-inositol 4-phosphate) + phosphate. The catalysed reaction is a 1,2-diacyl-sn-glycero-3-phospho-(1D-myo-inositol-3,4,5-trisphosphate) + H2O = a 1,2-diacyl-sn-glycero-3-phospho-(1D-myo-inositol-3,4-bisphosphate) + phosphate. It catalyses the reaction 1D-myo-inositol 1,4,5-trisphosphate + H2O = 1D-myo-inositol 1,4-bisphosphate + phosphate. Functionally, has phosphatase activity toward PtdIns(4,5)P2, PtdIns(3,4,5)P3 and Ins(1,4,5)P3. Has a higher substrate affinity toward PtdIns(4,5)P2. Required for secondary wall synthesis and actin organization in fiber cells. The polypeptide is Type II inositol polyphosphate 5-phosphatase 15 (Arabidopsis thaliana (Mouse-ear cress)).